The sequence spans 328 residues: UPF0194 membrane protein YPTS_1292 (328 aa).

An N-terminal signal peptide occupies residues 1–22; the sequence is MNRKKIIVAAVIVALLATLAYG. Coiled-coil stretches lie at residues 80–109 and 142–209; these read YLNA…REEE and AVSA…ILLA.

The protein belongs to the UPF0194 family.

The protein resides in the periplasm. The sequence is that of UPF0194 membrane protein YPTS_1292 from Yersinia pseudotuberculosis serotype IB (strain PB1/+).